A 253-amino-acid chain; its full sequence is uncharacterized protein (253 aa).

At Ala2 the chain carries N-acetylalanine.

Belongs to the NAD(P)-dependent epimerase/dehydratase family. In terms of assembly, homodimer.

This is an uncharacterized protein from Arabidopsis thaliana (Mouse-ear cress).